We begin with the raw amino-acid sequence, 220 residues long: Small ribosomal subunit protein eS1 (220 aa).

This sequence belongs to the eukaryotic ribosomal protein eS1 family.

In Methanococcus vannielii (strain ATCC 35089 / DSM 1224 / JCM 13029 / OCM 148 / SB), this protein is Small ribosomal subunit protein eS1.